We begin with the raw amino-acid sequence, 348 residues long: S-adenosylmethionine:tRNA ribosyltransferase-isomerase (348 aa).

Belongs to the QueA family. Monomer.

It localises to the cytoplasm. It carries out the reaction 7-aminomethyl-7-carbaguanosine(34) in tRNA + S-adenosyl-L-methionine = epoxyqueuosine(34) in tRNA + adenine + L-methionine + 2 H(+). It functions in the pathway tRNA modification; tRNA-queuosine biosynthesis. Its function is as follows. Transfers and isomerizes the ribose moiety from AdoMet to the 7-aminomethyl group of 7-deazaguanine (preQ1-tRNA) to give epoxyqueuosine (oQ-tRNA). This Polynucleobacter necessarius subsp. necessarius (strain STIR1) protein is S-adenosylmethionine:tRNA ribosyltransferase-isomerase.